The chain runs to 264 residues: MEMO1 family protein Mbur_2394 (264 aa).

The protein belongs to the MEMO1 family.

The sequence is that of MEMO1 family protein Mbur_2394 from Methanococcoides burtonii (strain DSM 6242 / NBRC 107633 / OCM 468 / ACE-M).